The following is a 534-amino-acid chain: Glucan endo-1,3-beta-glucosidase 12 (534 aa).

The signal sequence occupies residues 1-24 (MGQRLNLVFWIFVSILAFLNFGMA). The active-site Proton donor is the Glu120. Asn127 carries an N-linked (GlcNAc...) asparagine glycan. Residue Glu264 is the Nucleophile of the active site. 3 N-linked (GlcNAc...) asparagine glycosylation sites follow: Asn336, Asn357, and Asn375. The interval 348 to 379 (ENTTPVSPTNSTTGTSPSPSSSPIINGNSTVT) is disordered. The span at 349 to 377 (NTTPVSPTNSTTGTSPSPSSSPIINGNST) shows a compositional bias: low complexity. Cys392 and Cys455 are oxidised to a cystine. N-linked (GlcNAc...) asparagine glycosylation is found at Asn485, Asn491, and Asn495. Residue Ser507 is the site of GPI-anchor amidated serine attachment. Residues 508 to 534 (STNEAFRQMVVAVSVLLPCFVVCSSIW) constitute a propeptide, removed in mature form.

It belongs to the glycosyl hydrolase 17 family. Post-translationally, contains two additional disulfide bonds.

The protein localises to the secreted. It is found in the cell wall. Its subcellular location is the cell membrane. The catalysed reaction is Hydrolysis of (1-&gt;3)-beta-D-glucosidic linkages in (1-&gt;3)-beta-D-glucans.. The sequence is that of Glucan endo-1,3-beta-glucosidase 12 from Arabidopsis thaliana (Mouse-ear cress).